A 554-amino-acid chain; its full sequence is Raftlin (554 aa).

The N-myristoyl glycine moiety is linked to residue glycine 2. The S-palmitoyl cysteine moiety is linked to residue cysteine 3. Phosphoserine occurs at positions 183 and 199. Disordered regions lie at residues 192-249 (CTLG…NEAG), 441-488 (KKRE…DQFS), and 504-554 (GRAS…TEAN). Basic and acidic residues-rich tracts occupy residues 198–209 (SSLENDTPKAAE) and 475–487 (QAEENEKNLEDQF). 2 positions are modified to phosphoserine: serine 507 and serine 530. Residues 526-542 (HNRDSVALRHSNPRAEA) show a composition bias toward basic and acidic residues.

The protein belongs to the raftlin family. In terms of assembly, interacts with TLR4; the interaction occurs in response to lipopolysaccharide stimulation. Interacts with CLTC; the interaction occurs in response to pathogens. Interacts with AP2A1 and AP2B1. Expressed in T-cells, B-cells, thymus and spleen (at protein level). Expressed in dendritic cells, macrophages, heart, lung and small intestine.

It is found in the cell membrane. Its subcellular location is the cytoplasm. It localises to the membrane raft. The protein localises to the endosome. The protein resides in the early endosome. In terms of biological role, involved in protein trafficking via association with clathrin and AP2 complex. Upon bacterial lipopolysaccharide stimulation, mediates internalization of TLR4 to endosomes in dendritic cells and macrophages, and internalization of poly(I:C) to TLR3-positive endosomes in myeloid dendritic cells and epithelial cells; resulting in activation of TICAM1-mediated signaling and subsequent IFNB1 production. Involved in T-cell antigen receptor-mediated signaling by regulating tyrosine kinase LCK localization, T-cell dependent antibody production and cytokine secretion. May regulate B-cell antigen receptor-mediated signaling. May play a pivotal role in the formation and/or maintenance of lipid rafts. This is Raftlin (Rftn1) from Mus musculus (Mouse).